Reading from the N-terminus, the 80-residue chain is MAKFASIITLIFAALVLFAAFDAPAMVEAQKLCEKPSGTWSGVCGNSNACKNQCINLEGAKHGSCNYVFPAHKCICYVPC.

An N-terminal signal peptide occupies residues 1 to 29 (MAKFASIITLIFAALVLFAAFDAPAMVEA). Q30 is modified (pyrrolidone carboxylic acid). 4 cysteine pairs are disulfide-bonded: C33/C80, C44/C65, C50/C74, and C54/C76.

It belongs to the DEFL family. In terms of tissue distribution, predominantly expressed in leaves.

Its subcellular location is the secreted. Functionally, confers broad-spectrum resistance to pathogens. Has antifungal activity in vitro. In Arabidopsis thaliana (Mouse-ear cress), this protein is Defensin-like protein 16 (PDF1.2A).